A 963-amino-acid chain; its full sequence is Thrombospondin-4 (963 aa).

Positions 1–26 (MPAPRAAAAAFLLLHLVLQPWQRTSA) are cleaved as a signal peptide. The Laminin G-like domain maps to 29–194 (TPQVFDLLPS…LEELKLVVRG (166 aa)). Positions 138–140 (RGD) match the Cell attachment site motif. The region spanning 288–327 (PTRHCDSSPCFRGVRCTDTRDGFQCGPCPDGYTGNGITCS) is the EGF-like 1 domain. Cystine bridges form between Cys-292/Cys-303, Cys-297/Cys-312, Cys-315/Cys-326, Cys-332/Cys-343, Cys-337/Cys-352, Cys-355/Cys-379, Cys-385/Cys-396, Cys-390/Cys-405, Cys-408/Cys-420, Cys-426/Cys-440, Cys-434/Cys-450, Cys-452/Cys-463, Cys-479/Cys-484, Cys-489/Cys-509, Cys-525/Cys-545, Cys-548/Cys-568, Cys-584/Cys-604, Cys-607/Cys-627, Cys-645/Cys-665, Cys-685/Cys-705, and Cys-721/Cys-942. The EGF-like 2; calcium-binding domain maps to 328 to 365 (DVDECKYHPCYPGVRCVNLAPGFRCDACPVGFTGPMVQ). An EGF-like 3; calcium-binding domain is found at 381-418 (DVDECQNGACVLNSICINTLGSYRCGPCKPGYTGDQTR). The 43-residue stretch at 422-464 (TERSCRNPEQNPCSVHAQCIEERQGDVTCVCGVGWAGDGYVCG) folds into the EGF-like 4 domain. 8 TSP type-3 repeats span residues 465–497 (KDVD…NSGQ), 498–533 (EDAD…NIDQ), 534–556 (RNSD…NNDQ), 557–592 (KDTD…NRDQ), 593–615 (QDRD…NPNQ), 616–653 (SDVD…NSSQ), 654–693 (LDTD…NPAQ), and 694–729 (EDSN…EITL). A Cell attachment site motif is present at residues 564-566 (RGD). Positions 579–676 (NILDNCPRVP…DDDDNDGIPD (98 aa)) are disordered. Asn-614 and Asn-650 each carry an N-linked (GlcNAc...) asparagine glycan. The segment covering 642 to 654 (TDNCPTVINSSQL) has biased composition (polar residues). The segment covering 662–673 (GDECDDDDDNDG) has biased composition (acidic residues). Positions 733–947 (RAYQTVVLDP…LKYRCNDTIP (215 aa)) constitute a TSP C-terminal domain. An N-linked (GlcNAc...) asparagine glycan is attached at Asn-943.

This sequence belongs to the thrombospondin family. Homopentamer; disulfide-linked. Interacts with PTBP3. Interacts (via EGF-like 3; calcium-binding domain) with ATF6 and facilitates its processing, activation and nuclear translocation. Interacts with NOTCH1. In terms of tissue distribution, heart. Up-regulated in the heart in response to ischemic injury and pathology (at protein level). Astrocytes; expressed at high levels in subventricular zone (SVZ)-derived astrocytes and at low levels in cortical astrocytes. In response to peripheral nerve injury, significantly up-regulated in the dorsal spinal cord (at protein level).

The protein resides in the endoplasmic reticulum. The protein localises to the sarcoplasmic reticulum. It localises to the secreted. It is found in the extracellular space. Its subcellular location is the extracellular matrix. Its function is as follows. Adhesive glycoprotein that mediates cell-to-cell and cell-to-matrix interactions and is involved in various processes including cellular proliferation, migration, adhesion and attachment, inflammatory response to CNS injury, regulation of vascular inflammation and adaptive responses of the heart to pressure overload and in myocardial function and remodeling. Binds to structural extracellular matrix (ECM) proteins and modulates the ECM in response to tissue damage, contributing to cardioprotective and adaptive ECM remodeling. Plays a role in ER stress response, via its interaction with the activating transcription factor 6 alpha (ATF6) which produces adaptive ER stress response factors and protects myocardium from pressure overload. May contribute to spinal presynaptic hypersensitivity and neuropathic pain states after peripheral nerve injury. May play a role in regulating protective astrogenesis from the subventricular zone (SVZ) niche after injury in a NOTCH1-dependent manner. This is Thrombospondin-4 (Thbs4) from Mus musculus (Mouse).